Here is a 397-residue protein sequence, read N- to C-terminus: Elongation factor Tu-1 (397 aa).

In terms of domain architecture, tr-type G spans 10-206 (KPHVNIGTIG…AVDEAIPEPE (197 aa)). Residues 19 to 26 (GHIDHGKT) form a G1 region. Residue 19-26 (GHIDHGKT) coordinates GTP. Position 26 (Thr-26) interacts with Mg(2+). Residues 62–66 (GITIS) are G2. A G3 region spans residues 83 to 86 (DCPG). Residues 83 to 87 (DCPGH) and 138 to 141 (NKAD) contribute to the GTP site. The interval 138-141 (NKAD) is G4. A G5 region spans residues 176 to 178 (SAL).

Belongs to the TRAFAC class translation factor GTPase superfamily. Classic translation factor GTPase family. EF-Tu/EF-1A subfamily. Monomer.

It is found in the cytoplasm. The enzyme catalyses GTP + H2O = GDP + phosphate + H(+). In terms of biological role, GTP hydrolase that promotes the GTP-dependent binding of aminoacyl-tRNA to the A-site of ribosomes during protein biosynthesis. The protein is Elongation factor Tu-1 of Streptomyces coelicolor (strain ATCC BAA-471 / A3(2) / M145).